A 761-amino-acid chain; its full sequence is Proton-coupled zinc antiporter SLC30A5 (761 aa).

Methionine 1 carries the post-translational modification N-acetylmethionine. Residues 1-29 are Cytoplasmic-facing; sequence MEEKYGGDARPGPGGGLGPVDVPSARLTR. A helical membrane pass occupies residues 30–46; that stretch reads YILLLCLTKCLKAVGLF. Residues 47-54 are Lumenal-facing; it reads ESYDLLKA. The chain crosses the membrane as a helical span at residues 55–75; that stretch reads VHIVQFIFILKLGTAFFMVLF. Topologically, residues 76-96 are cytoplasmic; the sequence is QKPFSSGKPITKHQWIKIFKH. The chain crosses the membrane as a helical span at residues 97–117; sequence AVAGCIISLLWFFGLTLCGPL. Position 118 (arginine 118) is a topological domain, lumenal. The chain crosses the membrane as a helical span at residues 119-139; the sequence is TLLLFEHSDIVVISLLSVLFT. Over 140-150 the chain is Cytoplasmic; it reads SSGGGPAKTRG. A helical transmembrane segment spans residues 151–171; it reads AAFFIIAVICLLLFDNDDLMA. At 172–191 the chain is on the lumenal side; the sequence is KMAEHPEGHHDSALTHMLYT. The helical transmembrane segment at 192 to 212 threads the bilayer; sequence AIAFLGVADHKGGVLLLVLAL. Over 213-236 the chain is Cytoplasmic; it reads CCKVGFHTASRKLSIDVGGAKRLQ. Residues 237–257 traverse the membrane as a helical segment; sequence ALSQLVSVFLLCPWVIVLSVT. At 258 to 264 the chain is on the lumenal side; sequence TESKVES. Residues 265-285 form a helical membrane-spanning segment; sequence WFSLIMPFTTVIFFVMILDFY. Topologically, residues 286 to 301 are cytoplasmic; it reads MDSVCSVKMDVSKCAR. The chain crosses the membrane as a helical span at residues 302–322; the sequence is YGSFPIFISALLFGNFWTHPI. Topologically, residues 323–340 are lumenal; sequence TDQLRAMNRAAHQESTEH. The chain crosses the membrane as a helical span at residues 341–361; the sequence is VLSGGVVVSAVFFILSANILS. Over 362–416 the chain is Cytoplasmic; it reads SPSKRGQKGTLIGYSPEGTPLYHFMGDAFQHSSQSVPRFIKDSLKQVLEESDSRQ. Residues 417 to 437 form a helical membrane-spanning segment; sequence IFYFLCLNLLFTFVELFYGVL. A mediates homodimerization with SLC30A6 region spans residues 418 to 636; that stretch reads FYFLCLNLLF…VLIFLSVIPL (219 aa). The Lumenal segment spans residues 438-446; the sequence is TNSLGLISD. The helical transmembrane segment at 447–467 threads the bilayer; it reads GFHMLFDCSALVMGLFAALMS. Residues histidine 449 and aspartate 453 each contribute to the Zn(2+) site. At 468-481 the chain is on the cytoplasmic side; the sequence is RWKATRIFSYGYGR. The helical transmembrane segment at 482–502 threads the bilayer; it reads IEILSGFINGLFLIVIAFFVF. The Lumenal portion of the chain corresponds to 503 to 518; sequence MESVARLIDPPELDTN. The chain crosses the membrane as a helical span at residues 519–539; that stretch reads MLTPVSVGGLIVNLIGICAFS. A his-rich loop; required for zinc transport region spans residues 540 to 574; sequence HAHSHGHGASQGNCHSDHGHSHHAHGHGHDHGHSH. The Cytoplasmic portion of the chain corresponds to 540 to 588; the sequence is HAHSHGHGASQGNCHSDHGHSHHAHGHGHDHGHSHGFTGGGMNANMRGV. The tract at residues 549–576 is disordered; sequence SQGNCHSDHGHSHHAHGHGHDHGHSHGF. Residues 589–609 traverse the membrane as a helical segment; it reads FLHVLADTLGSIGVIVSTVLI. Zn(2+) contacts are provided by histidine 591 and aspartate 595. Residues 610–613 lie on the Lumenal side of the membrane; that stretch reads EQFG. Residues 614–634 form a helical membrane-spanning segment; the sequence is WFIADPLCSLFIAVLIFLSVI. The Cytoplasmic portion of the chain corresponds to 635–761; the sequence is PLIKDACQVL…KYCKDGTYIM (127 aa).

Belongs to the cation diffusion facilitator (CDF) transporter (TC 2.A.4) family. SLC30A subfamily. Heterodimer with SLC30A6/ZNT6; form a functional zinc ion transmembrane transporter. Could homodimerize through the formation of dityrosine bonds upon oxidative stress. In terms of tissue distribution, ubiquitously expressed.

It localises to the golgi apparatus. Its subcellular location is the golgi stack membrane. It is found in the cytoplasmic vesicle. The protein resides in the COPII-coated vesicle membrane. The protein localises to the secretory vesicle membrane. It localises to the trans-Golgi network membrane. It carries out the reaction Zn(2+)(in) + 2 H(+)(out) = Zn(2+)(out) + 2 H(+)(in). Its function is as follows. Together with SLC30A6 forms a functional proton-coupled zinc ion antiporter mediating zinc entry into the lumen of organelles along the secretory pathway. By contributing to zinc ion homeostasis within the early secretory pathway, regulates the activation and folding of enzymes like alkaline phosphatases and enzymes involved in phosphatidylinositol glycan anchor biosynthesis. Through the transport of zinc into secretory granules of pancreatic beta-cells, plays an important role in the storage and secretion of insulin. This is Proton-coupled zinc antiporter SLC30A5 from Mus musculus (Mouse).